The primary structure comprises 277 residues: Thiazole synthase (277 aa).

The Schiff-base intermediate with DXP role is filled by lysine 116. Residues glycine 177, 203-204, and 225-226 contribute to the 1-deoxy-D-xylulose 5-phosphate site; these read AG and NT.

It belongs to the ThiG family. In terms of assembly, homotetramer. Forms heterodimers with either ThiH or ThiS.

The protein localises to the cytoplasm. The catalysed reaction is [ThiS sulfur-carrier protein]-C-terminal-Gly-aminoethanethioate + 2-iminoacetate + 1-deoxy-D-xylulose 5-phosphate = [ThiS sulfur-carrier protein]-C-terminal Gly-Gly + 2-[(2R,5Z)-2-carboxy-4-methylthiazol-5(2H)-ylidene]ethyl phosphate + 2 H2O + H(+). It functions in the pathway cofactor biosynthesis; thiamine diphosphate biosynthesis. In terms of biological role, catalyzes the rearrangement of 1-deoxy-D-xylulose 5-phosphate (DXP) to produce the thiazole phosphate moiety of thiamine. Sulfur is provided by the thiocarboxylate moiety of the carrier protein ThiS. In vitro, sulfur can be provided by H(2)S. The polypeptide is Thiazole synthase (Thermosynechococcus vestitus (strain NIES-2133 / IAM M-273 / BP-1)).